The primary structure comprises 271 residues: Formamidopyrimidine-DNA glycosylase (271 aa).

Residue P2 is the Schiff-base intermediate with DNA of the active site. The active-site Proton donor is E3. The active-site Proton donor; for beta-elimination activity is K57. Residues H90, R109, and K151 each contribute to the DNA site. The FPG-type zinc finger occupies 236-270 (HVYGRGGETCTSCGNLLSEIRLGQRTTVFCGICQT). R260 functions as the Proton donor; for delta-elimination activity in the catalytic mechanism.

The protein belongs to the FPG family. As to quaternary structure, monomer. The cofactor is Zn(2+).

It catalyses the reaction Hydrolysis of DNA containing ring-opened 7-methylguanine residues, releasing 2,6-diamino-4-hydroxy-5-(N-methyl)formamidopyrimidine.. The enzyme catalyses 2'-deoxyribonucleotide-(2'-deoxyribose 5'-phosphate)-2'-deoxyribonucleotide-DNA = a 3'-end 2'-deoxyribonucleotide-(2,3-dehydro-2,3-deoxyribose 5'-phosphate)-DNA + a 5'-end 5'-phospho-2'-deoxyribonucleoside-DNA + H(+). In terms of biological role, involved in base excision repair of DNA damaged by oxidation or by mutagenic agents. Acts as a DNA glycosylase that recognizes and removes damaged bases. Has a preference for oxidized purines, such as 7,8-dihydro-8-oxoguanine (8-oxoG). Has AP (apurinic/apyrimidinic) lyase activity and introduces nicks in the DNA strand. Cleaves the DNA backbone by beta-delta elimination to generate a single-strand break at the site of the removed base with both 3'- and 5'-phosphates. This is Formamidopyrimidine-DNA glycosylase from Shewanella sp. (strain W3-18-1).